Consider the following 282-residue polypeptide: Acetyl-coenzyme A carboxylase carboxyl transferase subunit beta (282 aa).

A CoA carboxyltransferase N-terminal domain is found at 23 to 282 (IWTKCGQCDA…MLSKLHHQQA (260 aa)). Zn(2+)-binding residues include Cys-27, Cys-30, Cys-46, and Cys-49. Residues 27 to 49 (CGQCDAVLYKTELEKQLGVCPKC) form a C4-type zinc finger.

The protein belongs to the AccD/PCCB family. Acetyl-CoA carboxylase is a heterohexamer composed of biotin carboxyl carrier protein (AccB), biotin carboxylase (AccC) and two subunits each of ACCase subunit alpha (AccA) and ACCase subunit beta (AccD). Requires Zn(2+) as cofactor.

Its subcellular location is the cytoplasm. The enzyme catalyses N(6)-carboxybiotinyl-L-lysyl-[protein] + acetyl-CoA = N(6)-biotinyl-L-lysyl-[protein] + malonyl-CoA. The protein operates within lipid metabolism; malonyl-CoA biosynthesis; malonyl-CoA from acetyl-CoA: step 1/1. Component of the acetyl coenzyme A carboxylase (ACC) complex. Biotin carboxylase (BC) catalyzes the carboxylation of biotin on its carrier protein (BCCP) and then the CO(2) group is transferred by the transcarboxylase to acetyl-CoA to form malonyl-CoA. In Pseudoalteromonas atlantica (strain T6c / ATCC BAA-1087), this protein is Acetyl-coenzyme A carboxylase carboxyl transferase subunit beta.